Consider the following 73-residue polypeptide: Large ribosomal subunit protein bL31c (73 aa).

It belongs to the bacterial ribosomal protein bL31 family. Type A subfamily. In terms of assembly, part of the 50S ribosomal subunit.

The protein localises to the plastid. It is found in the chloroplast. Its function is as follows. Binds the 23S rRNA. The polypeptide is Large ribosomal subunit protein bL31c (Palmaria palmata (Dulse)).